Reading from the N-terminus, the 160-residue chain is SsrA-binding protein (160 aa).

This sequence belongs to the SmpB family.

It is found in the cytoplasm. Its function is as follows. Required for rescue of stalled ribosomes mediated by trans-translation. Binds to transfer-messenger RNA (tmRNA), required for stable association of tmRNA with ribosomes. tmRNA and SmpB together mimic tRNA shape, replacing the anticodon stem-loop with SmpB. tmRNA is encoded by the ssrA gene; the 2 termini fold to resemble tRNA(Ala) and it encodes a 'tag peptide', a short internal open reading frame. During trans-translation Ala-aminoacylated tmRNA acts like a tRNA, entering the A-site of stalled ribosomes, displacing the stalled mRNA. The ribosome then switches to translate the ORF on the tmRNA; the nascent peptide is terminated with the 'tag peptide' encoded by the tmRNA and targeted for degradation. The ribosome is freed to recommence translation, which seems to be the essential function of trans-translation. The sequence is that of SsrA-binding protein from Actinobacillus succinogenes (strain ATCC 55618 / DSM 22257 / CCUG 43843 / 130Z).